The sequence spans 123 residues: Aspartate 1-decarboxylase (123 aa).

S25 acts as the Schiff-base intermediate with substrate; via pyruvic acid in catalysis. Position 25 is a pyruvic acid (Ser) (S25). T57 serves as a coordination point for substrate. Y58 functions as the Proton donor in the catalytic mechanism. 73 to 75 is a binding site for substrate; it reads GAA.

This sequence belongs to the PanD family. In terms of assembly, heterooctamer of four alpha and four beta subunits. Pyruvate serves as cofactor. Is synthesized initially as an inactive proenzyme, which is activated by self-cleavage at a specific serine bond to produce a beta-subunit with a hydroxyl group at its C-terminus and an alpha-subunit with a pyruvoyl group at its N-terminus.

Its subcellular location is the cytoplasm. It catalyses the reaction L-aspartate + H(+) = beta-alanine + CO2. Its pathway is cofactor biosynthesis; (R)-pantothenate biosynthesis; beta-alanine from L-aspartate: step 1/1. Catalyzes the pyruvoyl-dependent decarboxylation of aspartate to produce beta-alanine. The polypeptide is Aspartate 1-decarboxylase (Clostridium novyi (strain NT)).